The primary structure comprises 970 residues: Transposase for insertion sequence element IS1071 in transposon Tn5271 (970 aa).

It belongs to the transposase 7 family.

Functionally, required for transposition of transposon Tn5271. The chain is Transposase for insertion sequence element IS1071 in transposon Tn5271 from Comamonas testosteroni (Pseudomonas testosteroni).